Here is a 229-residue protein sequence, read N- to C-terminus: Ras-related protein Rab-33B (229 aa).

8 residues coordinate GTP: Asn43, Val44, Gly45, Lys46, Thr47, Cys48, Thr62, and Thr65. Thr47 contacts Mg(2+). The short motif at 56 to 68 (GRFPDRTEATIGV) is the Switch 1 element. Thr65 and Asp88 together coordinate Mg(2+). The Switch 2 signature appears at 89–108 (TAGQERFRKSMVQHYYRNVH). Gly91, Asn148, Lys149, Asp151, Ala179, and Lys180 together coordinate GTP. 2 S-geranylgeranyl cysteine lipidation sites follow: Cys227 and Cys229. Cys229 is subject to Cysteine methyl ester.

This sequence belongs to the small GTPase superfamily. Rab family. In terms of assembly, interacts (GTP- and GDP-bound forms) with ATG16L1; the complex consists of a tetramer where two RAB33B molecules bind independently one molecule of the ATG16L1 homodimer; the interaction promotes ATG12-ATG5-ATG16L1 complex recruitment to phagophores. Interacts with ATG16L2; however interaction is approximately hundred times lower than for ATG16L1. Interacts with RIC1 (via C-terminus domain); the interaction is direct with a preference for RAB33B-GTP. Interacts with RGP1. Requires Mg(2+) as cofactor. In terms of processing, prenylated.

The protein resides in the golgi apparatus membrane. It is found in the golgi apparatus. The protein localises to the cis-Golgi network. Its subcellular location is the preautophagosomal structure membrane. The catalysed reaction is GTP + H2O = GDP + phosphate + H(+). Its activity is regulated as follows. Regulated by guanine nucleotide exchange factors (GEFs) which promote the exchange of bound GDP for free GTP. Regulated by GTPase activating proteins (GAPs) such as SGSM2 which increase the GTP hydrolysis activity. Inhibited by GDP dissociation inhibitors (GDIs). The small GTPases Rab are key regulators of intracellular membrane trafficking, from the formation of transport vesicles to their fusion with membranes. Rabs cycle between an inactive GDP-bound form and an active GTP-bound form that is able to recruit to membranes different sets of downstream effectors directly responsible for vesicle formation, movement, tethering and fusion. RAB33B acts, in coordination with RAB6A, to regulate intra-Golgi retrograde trafficking. Participates in autophagosome formation by recruiting the ATG12-ATG5-ATG16L1 complex to phagophores, probably in a nucleotide-independent manner. The sequence is that of Ras-related protein Rab-33B from Homo sapiens (Human).